Reading from the N-terminus, the 174-residue chain is Nicotinamide-nucleotide adenylyltransferase (174 aa).

The protein belongs to the archaeal NMN adenylyltransferase family.

It localises to the cytoplasm. The catalysed reaction is beta-nicotinamide D-ribonucleotide + ATP + H(+) = diphosphate + NAD(+). The protein operates within cofactor biosynthesis; NAD(+) biosynthesis; NAD(+) from nicotinamide D-ribonucleotide: step 1/1. This is Nicotinamide-nucleotide adenylyltransferase from Archaeoglobus fulgidus (strain ATCC 49558 / DSM 4304 / JCM 9628 / NBRC 100126 / VC-16).